The sequence spans 193 residues: Large ribosomal subunit protein uL18 (193 aa).

Belongs to the universal ribosomal protein uL18 family. In terms of assembly, part of the 50S ribosomal subunit. Contacts the 5S and 23S rRNAs.

Its function is as follows. This is one of the proteins that bind and probably mediate the attachment of the 5S RNA into the large ribosomal subunit, where it forms part of the central protuberance. This Methanococcus maripaludis (strain DSM 14266 / JCM 13030 / NBRC 101832 / S2 / LL) protein is Large ribosomal subunit protein uL18.